The following is a 291-amino-acid chain: tRNA dimethylallyltransferase (291 aa).

11–18 (GPTASGKS) is an ATP binding site. Residue 13-18 (TASGKS) coordinates substrate. The interaction with substrate tRNA stretch occupies residues 42-45 (DSMQ).

The protein belongs to the IPP transferase family. As to quaternary structure, monomer. Requires Mg(2+) as cofactor.

The catalysed reaction is adenosine(37) in tRNA + dimethylallyl diphosphate = N(6)-dimethylallyladenosine(37) in tRNA + diphosphate. Catalyzes the transfer of a dimethylallyl group onto the adenine at position 37 in tRNAs that read codons beginning with uridine, leading to the formation of N6-(dimethylallyl)adenosine (i(6)A). This Rubrobacter xylanophilus (strain DSM 9941 / JCM 11954 / NBRC 16129 / PRD-1) protein is tRNA dimethylallyltransferase.